The sequence spans 460 residues: Cysteine--tRNA ligase (460 aa).

Residue Cys28 participates in Zn(2+) binding. Residues 30-40 (MTVYDYCHLGH) carry the 'HIGH' region motif. The Zn(2+) site is built by Cys209, His234, and Glu238. The 'KMSKS' region motif lies at 266–270 (KMSKS). An ATP-binding site is contributed by Lys269.

The protein belongs to the class-I aminoacyl-tRNA synthetase family. As to quaternary structure, monomer. It depends on Zn(2+) as a cofactor.

It localises to the cytoplasm. The catalysed reaction is tRNA(Cys) + L-cysteine + ATP = L-cysteinyl-tRNA(Cys) + AMP + diphosphate. This is Cysteine--tRNA ligase from Pseudomonas putida (strain W619).